A 188-amino-acid chain; its full sequence is Ribonuclease HII (188 aa).

Residues 6–188 (KPLCGIDEAG…VKGLDEPTLF (183 aa)) form the RNase H type-2 domain. A divalent metal cation contacts are provided by Asp12, Glu13, and Asp99.

Belongs to the RNase HII family. It depends on Mn(2+) as a cofactor. The cofactor is Mg(2+).

Its subcellular location is the cytoplasm. The catalysed reaction is Endonucleolytic cleavage to 5'-phosphomonoester.. Its function is as follows. Endonuclease that specifically degrades the RNA of RNA-DNA hybrids. The chain is Ribonuclease HII from Sulfurovum sp. (strain NBC37-1).